A 1505-amino-acid chain; its full sequence is Anaphase-promoting complex subunit 1 (1505 aa).

The protein belongs to the APC1 family. The APC/C complex is probably composed of at least 12 subunits: apc-2, apc-10, apc-11, cdc-26, emb-1, emb-27, emb-30, mat-1, mat-2, mat-3, such-1 and gfi-3.

It participates in protein modification; protein ubiquitination. Functionally, probable component of the anaphase promoting complex/cyclosome (APC/C), a cell cycle-regulated E3 ubiquitin ligase that controls progression through mitosis and the G1 phase of the cell cycle. The APC/C complex acts by mediating ubiquitination and subsequent degradation of target proteins. Developmental role in early embryogenesis and the metaphase to anaphase transition in oocyte and spermatocyte meiosis and mitosis in germ cells. Required for embryonic anterior-posterior axis formation. Plays a role in regulating the abundance of glr-1 receptors in postmitotic neurons, which may in turn control animal locomotion. Involved in regulating GABA neurotransmitter release at neuromuscular junctions in GABA motor neurons. The polypeptide is Anaphase-promoting complex subunit 1 (Caenorhabditis elegans).